A 168-amino-acid chain; its full sequence is Bifunctional protein PyrR (168 aa).

Substrate-binding positions include 36–37 (TG), arginine 77, 94–102 (DDVLMSGRT), and valine 151. A PRPP-binding motif is present at residues 90–102 (LVLIDDVLMSGRT).

The protein belongs to the purine/pyrimidine phosphoribosyltransferase family. PyrR subfamily.

It carries out the reaction UMP + diphosphate = 5-phospho-alpha-D-ribose 1-diphosphate + uracil. Regulates the transcription of the pyrimidine nucleotide (pyr) operon in response to exogenous pyrimidines. In terms of biological role, also displays a weak uracil phosphoribosyltransferase activity which is not physiologically significant. In Pseudomonas fluorescens, this protein is Bifunctional protein PyrR.